Reading from the N-terminus, the 142-residue chain is Transcriptional regulator MraZ (142 aa).

SpoVT-AbrB domains are found at residues 5–51 (ASSL…PRPE) and 77–120 (AMDV…DKAT).

Belongs to the MraZ family. As to quaternary structure, forms oligomers.

It localises to the cytoplasm. It is found in the nucleoid. The polypeptide is Transcriptional regulator MraZ (Variovorax paradoxus (strain S110)).